The chain runs to 201 residues: FMN-dependent NADH:quinone oxidoreductase (201 aa).

Residues Ser10, 16 to 18 (SQS), 96 to 99 (MYNF), and 140 to 143 (SRGG) each bind FMN.

It belongs to the azoreductase type 1 family. Homodimer. The cofactor is FMN.

It carries out the reaction 2 a quinone + NADH + H(+) = 2 a 1,4-benzosemiquinone + NAD(+). The catalysed reaction is N,N-dimethyl-1,4-phenylenediamine + anthranilate + 2 NAD(+) = 2-(4-dimethylaminophenyl)diazenylbenzoate + 2 NADH + 2 H(+). In terms of biological role, quinone reductase that provides resistance to thiol-specific stress caused by electrophilic quinones. Its function is as follows. Also exhibits azoreductase activity. Catalyzes the reductive cleavage of the azo bond in aromatic azo compounds to the corresponding amines. The polypeptide is FMN-dependent NADH:quinone oxidoreductase (Escherichia coli O157:H7).